The sequence spans 312 residues: Olfactory receptor 2M5 (312 aa).

The Extracellular portion of the chain corresponds to 1–25 (MAWENQTFNSDFILLGIFNHSPTHT). N5 is a glycosylation site (N-linked (GlcNAc...) asparagine). A helical membrane pass occupies residues 26–49 (FLFFLVLAIFSVAFMGNSVMVLLI). Over 50-57 (YLDTQLHT) the chain is Cytoplasmic. The helical transmembrane segment at 58–79 (PMYFLLSQLFLMDLMLICSTVP) threads the bilayer. Topologically, residues 80-100 (KMAFNYLSGSKSISMAGCATQ) are extracellular. Residues C97 and C189 are joined by a disulfide bond. The chain crosses the membrane as a helical span at residues 101 to 120 (IFFYVSLLGSECFLLAVMSY). Topologically, residues 121-139 (DRYIAICHPLRYTNLMRPK) are cytoplasmic. A helical transmembrane segment spans residues 140–158 (ICGLMTAFSWILGSMDAII). Residues 159–195 (DAVATFSFSYCGSREIAHFFCDFPSLLILSCNDTSIF) are Extracellular-facing. The chain crosses the membrane as a helical span at residues 196–219 (EKVLFICCIVMIVFPVAIIIASYA). Residues 220–236 (RVILAVIHMGSGEGRRK) lie on the Cytoplasmic side of the membrane. Residues 237–259 (AFTTCSSHLMVVGMYYGAGLFMY) form a helical membrane-spanning segment. The Extracellular portion of the chain corresponds to 260-272 (IRPTSDRSPMQDK). The helical transmembrane segment at 273–292 (LVSVFYTILTPMLNPLIYSL) threads the bilayer. The Cytoplasmic segment spans residues 293–311 (RNKEVTRALRKVLGKGKCG).

This sequence belongs to the G-protein coupled receptor 1 family.

It is found in the cell membrane. In terms of biological role, odorant receptor. The chain is Olfactory receptor 2M5 (OR2M5) from Homo sapiens (Human).